The following is a 323-amino-acid chain: Fructose-1,6-bisphosphatase class 1 (323 aa).

4 residues coordinate Mg(2+): Glu-88, Asp-107, Leu-109, and Asp-110. Substrate contacts are provided by residues 110 to 113 and Asn-200; that span reads DGSS. Residue Glu-272 coordinates Mg(2+).

The protein belongs to the FBPase class 1 family. Homotetramer. It depends on Mg(2+) as a cofactor.

It is found in the cytoplasm. It carries out the reaction beta-D-fructose 1,6-bisphosphate + H2O = beta-D-fructose 6-phosphate + phosphate. The protein operates within carbohydrate biosynthesis; gluconeogenesis. The protein is Fructose-1,6-bisphosphatase class 1 of Acinetobacter baylyi (strain ATCC 33305 / BD413 / ADP1).